Reading from the N-terminus, the 390-residue chain is GTPase Obg (390 aa).

The Obg domain maps to 1–159; that stretch reads MKFVDEASIL…RELLLELMLL (159 aa). Residues 127–147 form a disordered region; that stretch reads NTRFKSSVNRTPRQKTNGTPG. Residues 129-145 show a composition bias toward polar residues; it reads RFKSSVNRTPRQKTNGT. The 174-residue stretch at 160 to 333 folds into the OBG-type G domain; it reads ADVGMLGMPN…LCWDVMTFIL (174 aa). GTP contacts are provided by residues 166 to 173, 191 to 195, 213 to 216, 283 to 286, and 314 to 316; these read GMPNAGKS, FTTLV, DIPG, NKID, and SAA. 2 residues coordinate Mg(2+): Ser173 and Thr193.

Belongs to the TRAFAC class OBG-HflX-like GTPase superfamily. OBG GTPase family. Monomer. Mg(2+) is required as a cofactor.

The protein resides in the cytoplasm. In terms of biological role, an essential GTPase which binds GTP, GDP and possibly (p)ppGpp with moderate affinity, with high nucleotide exchange rates and a fairly low GTP hydrolysis rate. Plays a role in control of the cell cycle, stress response, ribosome biogenesis and in those bacteria that undergo differentiation, in morphogenesis control. The chain is GTPase Obg from Shigella sonnei (strain Ss046).